The sequence spans 379 residues: Class V chitinase (379 aa).

The N-terminal stretch at 1-24 is a signal peptide; that stretch reads MSSTKLISLIVSITFFLTLQCSMA. Positions 27-369 constitute a GH18 domain; that stretch reads VVKASYWFPA…RAASQAWDAT (343 aa). Position 99 (G99) interacts with chitin. E140 acts as the Proton donor in catalysis. Y259 serves as a coordination point for chitin. 2 N-linked (GlcNAc...) asparagine glycosylation sites follow: N307 and N327. Position 348 (W348) interacts with chitin.

The protein belongs to the glycosyl hydrolase 18 family. Chitinase class V subfamily.

The enzyme catalyses Random endo-hydrolysis of N-acetyl-beta-D-glucosaminide (1-&gt;4)-beta-linkages in chitin and chitodextrins.. It catalyses the reaction Hydrolysis of N,N'-diacetylchitobiose from the non-reducing end of chitin and chitodextrins.. It participates in glycan degradation; chitin degradation. In terms of biological role, can hydrolyze glycol chitin and chitin oligosaccharides (e.g. N-acetylglucosamine) (GlcNAc)4, (GlcNAc)5 and (GlcNAc)6. Hydrolyzes N-acetylglucosamine oligomers producing dimers from the non-reducing end of the substrates. In Arabidopsis thaliana (Mouse-ear cress), this protein is Class V chitinase.